Here is a 149-residue protein sequence, read N- to C-terminus: Calmodulin-5/6/7/8 (149 aa).

An N-acetylalanine modification is found at alanine 2. 4 consecutive EF-hand domains span residues 8-43 (DQIS…LGQN), 44-79 (PTEA…KMKD), 81-116 (DSEE…LGEK), and 117-149 (LTDE…MMAK). Ca(2+)-binding residues include aspartate 21, aspartate 23, aspartate 25, cysteine 27, glutamate 32, aspartate 57, aspartate 59, asparagine 61, threonine 63, glutamate 68, aspartate 94, aspartate 96, asparagine 98, and glutamate 105. Residue lysine 116 is modified to N6,N6,N6-trimethyllysine. Ca(2+)-binding residues include aspartate 130, aspartate 132, aspartate 134, glutamine 136, and glutamate 141.

The protein belongs to the calmodulin family. In terms of tissue distribution, high expression of PCM5 and 8 in stolon tips and stems, moderate in roots, and low in leaves. Steady-state expression of PCM6 in all the tissues tested, except in the leaves where the expression is lower.

Functionally, calmodulin mediates the control of a large number of enzymes, ion channels and other proteins by Ca(2+). Among the enzymes to be stimulated by the calmodulin-Ca(2+) complex are a number of protein kinases and phosphatases. This Solanum tuberosum (Potato) protein is Calmodulin-5/6/7/8 (PCM5).